The sequence spans 519 residues: Acetylcholine receptor subunit beta-like 2 (519 aa).

The N-terminal stretch at 1-18 is a signal peptide; it reads MWHWSLLCVFLLVPLANS. The Extracellular segment spans residues 19–244; it reads TAPISFEANP…ITFKLTMRRK (226 aa). Residue Asn50 is glycosylated (N-linked (GlcNAc...) asparagine). Cys154 and Cys168 form a disulfide bridge. Helical transmembrane passes span 245–269, 277–295, and 311–332; these read TLFY…VFYL, VTLC…LLLA, and YLLF…VLNI. Topologically, residues 333 to 462 are cytoplasmic; sequence HFRSPSTHNM…WKFVSMVLDR (130 aa). The chain crosses the membrane as a helical span at residues 463-481; the sequence is FFLWLFTLSCVFGTLAIIC.

This sequence belongs to the ligand-gated ion channel (TC 1.A.9) family. Acetylcholine receptor (TC 1.A.9.1) subfamily. In terms of tissue distribution, CNS in embryos.

It is found in the postsynaptic cell membrane. The protein resides in the cell membrane. In terms of biological role, after binding acetylcholine, the AChR responds by an extensive change in conformation that affects all subunits and leads to opening of an ion-conducting channel across the plasma membrane. The protein is Acetylcholine receptor subunit beta-like 2 (nAChRbeta2) of Drosophila melanogaster (Fruit fly).